The following is a 1254-amino-acid chain: NPC intracellular cholesterol transporter 1 homolog 1b (1254 aa).

Residues M1–S16 form the signal peptide. The Extracellular segment spans residues Q17–T272. 8 cysteine pairs are disulfide-bonded: C24–C81, C62–C116, C82–C120, C104–C241, C107–C161, C178–C186, C231–C246, and C243–C250. 2 N-linked (GlcNAc...) asparagine glycosylation sites follow: N123 and N132. The chain crosses the membrane as a helical span at residues F273–G293. The Cytoplasmic portion of the chain corresponds to K294–P325. A helical membrane pass occupies residues V326–M346. The Extracellular portion of the chain corresponds to T347 to V593. N-linked (GlcNAc...) asparagine glycosylation is present at N389. Cysteines 438 and 454 form a disulfide. N479 carries an N-linked (GlcNAc...) asparagine glycan. C491 and C500 are oxidised to a cystine. The region spanning E592–I757 is the SSD domain. A helical membrane pass occupies residues S594–I614. Topologically, residues R615–R625 are cytoplasmic. The chain crosses the membrane as a helical span at residues I626–F646. Residues W647–L657 lie on the Extracellular side of the membrane. Residues A658–V678 form a helical membrane-spanning segment. Over H679–A736 the chain is Cytoplasmic. Residues A737–I757 form a helical membrane-spanning segment. Residues D758–K815 lie on the Extracellular side of the membrane. A helical transmembrane segment spans residues V816–I836. The Cytoplasmic portion of the chain corresponds to E837–R857. The helical transmembrane segment at Y858–N878 threads the bilayer. Topologically, residues Y879–A1079 are extracellular. A disulfide bridge connects residues C889 and C894. N-linked (GlcNAc...) asparagine glycans are attached at residues N896 and N939. Cystine bridges form between C935–C990, C936–C958, and C946–C955. Residues M1080–L1100 traverse the membrane as a helical segment. The Cytoplasmic segment spans residues D1101–T1105. Residues F1106–W1126 form a helical membrane-spanning segment. Topologically, residues S1127–A1132 are extracellular. The helical transmembrane segment at I1133 to V1153 threads the bilayer. Topologically, residues R1154–T1174 are cytoplasmic. A helical membrane pass occupies residues G1175 to F1195. Topologically, residues S1196–R1207 are extracellular. A helical transmembrane segment spans residues M1208–L1228. Residues S1229–N1254 lie on the Cytoplasmic side of the membrane.

This sequence belongs to the patched family. As to expression, expressed in the midgut.

Its subcellular location is the cell membrane. It carries out the reaction cholesterol(in) = cholesterol(out). Important for cholesterol absorption at the midgut epithelium. Acts only in the early steps of sterol absorption, prior to Npc1a-dependent intracellular sterol trafficking. This is NPC intracellular cholesterol transporter 1 homolog 1b from Drosophila melanogaster (Fruit fly).